Here is a 139-residue protein sequence, read N- to C-terminus: Nucleoside diphosphate kinase (139 aa).

Residues Lys-11, Phe-59, Arg-87, Thr-93, Arg-104, and Asn-114 each contribute to the ATP site. His-117 acts as the Pros-phosphohistidine intermediate in catalysis.

It belongs to the NDK family. As to quaternary structure, homotetramer. Mg(2+) is required as a cofactor.

The protein localises to the cytoplasm. The enzyme catalyses a 2'-deoxyribonucleoside 5'-diphosphate + ATP = a 2'-deoxyribonucleoside 5'-triphosphate + ADP. The catalysed reaction is a ribonucleoside 5'-diphosphate + ATP = a ribonucleoside 5'-triphosphate + ADP. Functionally, major role in the synthesis of nucleoside triphosphates other than ATP. The ATP gamma phosphate is transferred to the NDP beta phosphate via a ping-pong mechanism, using a phosphorylated active-site intermediate. This is Nucleoside diphosphate kinase from Pasteurella multocida (strain Pm70).